The sequence spans 162 residues: UPF0114 protein Pput_0713 (162 aa).

Helical transmembrane passes span 15–35, 53–73, 109–126, and 136–156; these read LLAPIYFGLSLGLLALALKFF, LILVILSLIDMSLVGGLLVMV, VAASIVAISSIHLLRVFM, and LMWYVIIHMTFVVSAFCMGYL.

This sequence belongs to the UPF0114 family.

It localises to the cell membrane. This Pseudomonas putida (strain ATCC 700007 / DSM 6899 / JCM 31910 / BCRC 17059 / LMG 24140 / F1) protein is UPF0114 protein Pput_0713.